The sequence spans 222 residues: 3-demethoxyubiquinol 3-hydroxylase (222 aa).

The Fe cation site is built by Glu71, Glu101, His104, Glu153, Glu185, and His188.

It belongs to the COQ7 family. It depends on Fe cation as a cofactor.

The protein resides in the cell membrane. The enzyme catalyses a 5-methoxy-2-methyl-3-(all-trans-polyprenyl)benzene-1,4-diol + AH2 + O2 = a 3-demethylubiquinol + A + H2O. Its pathway is cofactor biosynthesis; ubiquinone biosynthesis. Functionally, catalyzes the hydroxylation of 2-nonaprenyl-3-methyl-6-methoxy-1,4-benzoquinol during ubiquinone biosynthesis. The protein is 3-demethoxyubiquinol 3-hydroxylase of Bordetella pertussis (strain Tohama I / ATCC BAA-589 / NCTC 13251).